The primary structure comprises 378 residues: Response regulator aspartate phosphatase A (378 aa).

6 TPR repeats span residues 101–137 (YYFN…VSDD), 148–181 (AEIF…TVRR), 183–215 (QCEF…AKKE), 222–255 (SSAL…CKSE), 261–294 (PHSI…ARQY), and 336–369 (EELA…QKQI).

This sequence belongs to the Rap family. As to quaternary structure, homodimer. Interacts with its substrate, phosphorylated Spo0F, and its inhibitor, the PhrA pentapeptide. The RapA dimer forms a stable complex with two molecules of phosphorylated Spo0F. The complex is dissociated after dephosphorylation of Spo0F by RapA. Mn(2+) serves as cofactor.

The protein localises to the cytoplasm. Phosphatase activity is inhibited by the phosphatase regulator PhrA. Interaction with PhrA dissociates the RapA-Spo0F complex. Activity is abolished in the presence of EDTA. Involved in the regulation of sporulation. Acts as a phosphatase that specifically dephosphorylates the sporulation initiation phosphotransferase Spo0F and inhibits its activity. The chain is Response regulator aspartate phosphatase A from Bacillus subtilis (strain 168).